The primary structure comprises 194 residues: Large ribosomal subunit protein uL24c (194 aa).

Residues 1-50 (MVAMAMASLQSSMSSLSLSSNSFLGQPLSPITLSPFLQGKPTEKKCLIVM) constitute a chloroplast transit peptide.

This sequence belongs to the universal ribosomal protein uL24 family. As to quaternary structure, part of the 50S ribosomal subunit.

The protein resides in the plastid. It is found in the chloroplast. One of two assembly initiator proteins, it binds directly to the 5'-end of the 23S rRNA, where it nucleates assembly of the 50S subunit. This is Large ribosomal subunit protein uL24c (RPL24) from Pisum sativum (Garden pea).